A 238-amino-acid chain; its full sequence is Ditrans,polycis-undecaprenyl-diphosphate synthase ((2E,6E)-farnesyl-diphosphate specific) (238 aa).

Aspartate 14 is a catalytic residue. Position 14 (aspartate 14) interacts with Mg(2+). Substrate is bound by residues 15-18, tryptophan 19, arginine 27, histidine 31, and 59-61; these read GNGR and SSE. Asparagine 62 serves as the catalytic Proton acceptor. Substrate contacts are provided by residues tryptophan 63, arginine 65, arginine 182, and 188-190; that span reads RIS. Glutamate 201 contributes to the Mg(2+) binding site.

It belongs to the UPP synthase family. In terms of assembly, homodimer. The cofactor is Mg(2+).

The enzyme catalyses 8 isopentenyl diphosphate + (2E,6E)-farnesyl diphosphate = di-trans,octa-cis-undecaprenyl diphosphate + 8 diphosphate. Its function is as follows. Catalyzes the sequential condensation of isopentenyl diphosphate (IPP) with (2E,6E)-farnesyl diphosphate (E,E-FPP) to yield (2Z,6Z,10Z,14Z,18Z,22Z,26Z,30Z,34E,38E)-undecaprenyl diphosphate (di-trans,octa-cis-UPP). UPP is the precursor of glycosyl carrier lipid in the biosynthesis of bacterial cell wall polysaccharide components such as peptidoglycan and lipopolysaccharide. This is Ditrans,polycis-undecaprenyl-diphosphate synthase ((2E,6E)-farnesyl-diphosphate specific) from Legionella pneumophila subsp. pneumophila (strain Philadelphia 1 / ATCC 33152 / DSM 7513).